Here is a 563-residue protein sequence, read N- to C-terminus: Forkhead box protein O (563 aa).

2 disordered regions span residues 1–72 and 177–243; these read MDDF…DPQQ and KSVR…SYQL. Thr43 is subject to Phosphothreonine; by PKB/AKT1. A compositionally biased stretch (polar residues) spans 58–72; it reads TKASNQQLANGDPQQ. The fork-head DNA-binding region spans 90-196; sequence WGNLSYADLI…ETSRYEKRRG (107 aa). A Phosphoserine; by PKB/AKT1 modification is found at Ser185. Positions 216–225 are enriched in polar residues; sequence ATPSPSSSVS. Ser253 carries the phosphoserine; by PKB/AKT1 modification. 3 positions are modified to phosphoserine: Ser256, Ser257, and Ser262. The tract at residues 317–371 is disordered; that stretch reads AASGLPTQPPPPYQPPQHPQHTQGYALNGPGLSPNSVTTTMSPAYPNSEPSSDSL. Pro residues predominate over residues 323 to 334; the sequence is TQPPPPYQPPQH. The segment covering 349–358 has biased composition (polar residues); the sequence is SPNSVTTTMS.

Interacts with melt.

The protein resides in the cytoplasm. Its subcellular location is the nucleus. Transcription factor involved in the regulation of the insulin signaling pathway. Consistently activates both the downstream target Thor\d4EBP and the feedback control target InR. Involved in negative regulation of the cell cycle, modulating cell growth and proliferation. In response to cellular stresses, such as nutrient deprivation or increased levels of reactive oxygen species, foxo is activated and inhibits growth through the action of target genes such as Thor. Foxo activated in the adult fat body can regulate lifespan in adults; an insulin peptide itself may function as one secondary messenger of insulin-regulated aging. Also regulates Lip4, homolog of human acid lipases, thereby acting as a key modulator of lipid metabolism by insulin signaling and integrates insulin responses to glucose and lipid homeostasis. In Drosophila mojavensis (Fruit fly), this protein is Forkhead box protein O.